A 342-amino-acid chain; its full sequence is Phosphoribosylformylglycinamidine cyclo-ligase (342 aa).

This sequence belongs to the AIR synthase family.

Its subcellular location is the cytoplasm. The enzyme catalyses 2-formamido-N(1)-(5-O-phospho-beta-D-ribosyl)acetamidine + ATP = 5-amino-1-(5-phospho-beta-D-ribosyl)imidazole + ADP + phosphate + H(+). The protein operates within purine metabolism; IMP biosynthesis via de novo pathway; 5-amino-1-(5-phospho-D-ribosyl)imidazole from N(2)-formyl-N(1)-(5-phospho-D-ribosyl)glycinamide: step 2/2. This chain is Phosphoribosylformylglycinamidine cyclo-ligase, found in Staphylococcus aureus (strain Mu3 / ATCC 700698).